A 570-amino-acid chain; its full sequence is Proline--tRNA ligase (570 aa).

It belongs to the class-II aminoacyl-tRNA synthetase family. ProS type 1 subfamily. Homodimer.

It localises to the cytoplasm. It catalyses the reaction tRNA(Pro) + L-proline + ATP = L-prolyl-tRNA(Pro) + AMP + diphosphate. In terms of biological role, catalyzes the attachment of proline to tRNA(Pro) in a two-step reaction: proline is first activated by ATP to form Pro-AMP and then transferred to the acceptor end of tRNA(Pro). As ProRS can inadvertently accommodate and process non-cognate amino acids such as alanine and cysteine, to avoid such errors it has two additional distinct editing activities against alanine. One activity is designated as 'pretransfer' editing and involves the tRNA(Pro)-independent hydrolysis of activated Ala-AMP. The other activity is designated 'posttransfer' editing and involves deacylation of mischarged Ala-tRNA(Pro). The misacylated Cys-tRNA(Pro) is not edited by ProRS. The chain is Proline--tRNA ligase from Syntrophomonas wolfei subsp. wolfei (strain DSM 2245B / Goettingen).